The chain runs to 861 residues: Leucine--tRNA ligase (861 aa).

The 'HIGH' region signature appears at Pro-42–His-52. Positions Lys-619–Ser-623 match the 'KMSKS' region motif. Position 622 (Lys-622) interacts with ATP.

It belongs to the class-I aminoacyl-tRNA synthetase family.

It is found in the cytoplasm. It catalyses the reaction tRNA(Leu) + L-leucine + ATP = L-leucyl-tRNA(Leu) + AMP + diphosphate. This chain is Leucine--tRNA ligase, found in Actinobacillus pleuropneumoniae serotype 5b (strain L20).